Here is a 208-residue protein sequence, read N- to C-terminus: Putative 3-methyladenine DNA glycosylase (208 aa).

It belongs to the DNA glycosylase MPG family.

This chain is Putative 3-methyladenine DNA glycosylase, found in Lactobacillus delbrueckii subsp. bulgaricus (strain ATCC 11842 / DSM 20081 / BCRC 10696 / JCM 1002 / NBRC 13953 / NCIMB 11778 / NCTC 12712 / WDCM 00102 / Lb 14).